A 511-amino-acid polypeptide reads, in one-letter code: MGQGDESERIVINVGGTRHQTYRSTLRTLPGTRLAWLAEPDAHSHFDYDPRADEFFFDRHPGVFAHILNYYRTGKLHCPADVCGPLYEEELAFWGIDETDVEPCCWMTYRQHRDAEEALDSFGGAPLDNSADDADADGPGDSGDGEDELEMTKRLALSDSPDGRPGGFWRRWQPRIWALFEDPYSSRYARYVAFASLFFILVSITTFCLETHERFNPIVNKTEIENVRNGTQVRYYREAETEAFLTYIEGVCVVWFTFEFLMRVVFCPNKVEFIKNSLNIIDFVAILPFYLEVGLSGLSSKAAKDVLGFLRVVRFVRILRIFKLTRHFVGLRVLGHTLRASTNEFLLLIIFLALGVLIFATMIYYAERIGAQPNDPSASEHTHFKNIPIGFWWAVVTMTTLGYGDMYPQTWSGMLVGALCALAGVLTIAMPVPVIVNNFGMYYSLAMAKQKLPKKKKKHIPRPPQLGSPNYCKSVVNSPHHSTQSDTCPLAQEEILEINRAGRKPLRGMSI.

The Cytoplasmic portion of the chain corresponds to 1–190 (MGQGDESERI…EDPYSSRYAR (190 aa)). Ser44 carries the phosphoserine modification. Zn(2+) contacts are provided by His77, Cys83, Cys104, and Cys105. Residues 121–147 (SFGGAPLDNSADDADADGPGDSGDGED) form a disordered region. Residues Ser130, Ser142, Ser158, and Ser160 each carry the phosphoserine modification. A compositionally biased stretch (acidic residues) spans 130-147 (SADDADADGPGDSGDGED). A helical transmembrane segment spans residues 191 to 209 (YVAFASLFFILVSITTFCL). N-linked (GlcNAc...) asparagine glycosylation is found at Asn220 and Asn229. A helical transmembrane segment spans residues 248-267 (IEGVCVVWFTFEFLMRVVFC). Residues 268 to 276 (PNKVEFIKN) lie on the Cytoplasmic side of the membrane. The helical transmembrane segment at 277-295 (SLNIIDFVAILPFYLEVGL) threads the bilayer. Residues 309 to 331 (FLRVVRFVRILRIFKLTRHFVGL) traverse the membrane as a helical; Voltage-sensor segment. Residues 332–344 (RVLGHTLRASTNE) are Cytoplasmic-facing. The helical transmembrane segment at 345–366 (FLLLIIFLALGVLIFATMIYYA) threads the bilayer. 4 residues coordinate K(+): Thr400, Leu401, Gly402, and Tyr403. The Selectivity filter signature appears at 400-405 (TLGYGD). The helical transmembrane segment at 415–436 (LVGALCALAGVLTIAMPVPVIV) threads the bilayer. Residues 437-511 (NNFGMYYSLA…GRKPLRGMSI (75 aa)) are Cytoplasmic-facing. Ser474 bears the Phosphoserine mark. Thr483 carries the phosphothreonine modification.

It belongs to the potassium channel family. C (Shaw) (TC 1.A.1.2) subfamily. Kv3.1/KCNC1 sub-subfamily. Homotetramer. Homomultimer. Heteromultimer with KCNG3, KCNG4 and KCNV2. Heteromultimer with KCNC2. Heterotetramer with KCNC3. Interacts with the ancillary subunits KCNE1 and KCNE2; the interaction modulates channel activity. N-glycosylated; contains sialylated glycans. As to expression, detected in cerebellum. Detected in brain (at protein level). Detected in brain.

The protein resides in the cell membrane. Its subcellular location is the cell projection. It localises to the axon. The protein localises to the presynaptic cell membrane. It catalyses the reaction K(+)(in) = K(+)(out). In terms of biological role, voltage-gated potassium channel that opens in response to the voltage difference across the membrane and through which potassium ions pass in accordance with their electrochemical gradient. The mechanism is time-dependent and inactivation is slow. Plays an important role in the rapid repolarization of fast-firing brain neurons. Can form functional homotetrameric channels and heterotetrameric channels that contain variable proportions of KCNC2, and possibly other family members as well. Contributes to fire sustained trains of very brief action potentials at high frequency in pallidal neurons. This chain is Voltage-gated potassium channel KCNC1, found in Mus musculus (Mouse).